Reading from the N-terminus, the 411-residue chain is S-adenosylmethionine synthase (411 aa).

Residue H15 participates in ATP binding. D17 contacts Mg(2+). Residue E43 coordinates K(+). Positions 56 and 100 each coordinate L-methionine. The flexible loop stretch occupies residues 100–110 (QSPDIAQGVNE). ATP contacts are provided by residues 171–173 (DGK), 248–249 (KF), D257, 263–264 (RK), A280, and K284. D257 serves as a coordination point for L-methionine. Position 288 (K288) interacts with L-methionine.

It belongs to the AdoMet synthase family. Homotetramer; dimer of dimers. Requires Mg(2+) as cofactor. The cofactor is K(+).

The protein resides in the cytoplasm. It catalyses the reaction L-methionine + ATP + H2O = S-adenosyl-L-methionine + phosphate + diphosphate. Its pathway is amino-acid biosynthesis; S-adenosyl-L-methionine biosynthesis; S-adenosyl-L-methionine from L-methionine: step 1/1. Its function is as follows. Catalyzes the formation of S-adenosylmethionine (AdoMet) from methionine and ATP. The overall synthetic reaction is composed of two sequential steps, AdoMet formation and the subsequent tripolyphosphate hydrolysis which occurs prior to release of AdoMet from the enzyme. The sequence is that of S-adenosylmethionine synthase from Synechococcus sp. (strain CC9605).